The primary structure comprises 440 residues: Xylose isomerase (440 aa).

Residues histidine 99 and aspartate 102 contribute to the active site. Glutamate 230, glutamate 266, histidine 269, aspartate 294, aspartate 305, aspartate 307, and aspartate 337 together coordinate Mg(2+).

This sequence belongs to the xylose isomerase family. In terms of assembly, homotetramer. The cofactor is Mg(2+).

The protein resides in the cytoplasm. The catalysed reaction is alpha-D-xylose = alpha-D-xylulofuranose. The protein is Xylose isomerase of Halalkalibacterium halodurans (strain ATCC BAA-125 / DSM 18197 / FERM 7344 / JCM 9153 / C-125) (Bacillus halodurans).